We begin with the raw amino-acid sequence, 72 residues long: Potassium channel toxin epsilon-KTx 1.1 (72 aa).

Positions 1-30 are cleaved as a signal peptide; it reads MKLSCGFLLILLVLSAMIATFSEVEAMKPS. 4 disulfide bridges follow: C34/C42, C37/C58, C41/C51, and C46/C56. The propeptide occupies 60–72; the sequence is GRSDLNDELEKYQ.

Belongs to the short scorpion toxin superfamily. Potassium channel inhibitor family. Epsilon-KTx 01 subfamily. Expressed by the venom gland.

It localises to the secreted. In terms of biological role, potassium channel blocker. At 3 uM, this toxin blocks voltage-independently voltage-gated potassium channels rKv1.2/KCNA2 (25%), hKv1.3/KCNA3 (27%), rKv4.2/KCND2 (25%), Kv10.1/KCNH1/EAG1 (15%), Kv11/hERG (12%), and Shaker-IR (10%). On hKv1.3/KCNA3, the IC(50) is 17.1 +-3.3 uM. This chain is Potassium channel toxin epsilon-KTx 1.1, found in Tityus serrulatus (Brazilian scorpion).